Consider the following 417-residue polypeptide: MSKLKITGGNPLFGKVEISGAKNAAVAILPATIMASKGVCTIENTPNIEDVHCIERILNGLGCEIKRQSNSILQIDSTNITKTDANTEDVRKMRASYYLIGALLGRFKKARVELPGGCPIGVRPIDQHIKGFEALGAHVEIEHGAVIVKADKLIGTNIFFDVVSVGATINVMLAATLAEGNTVLENVAKEPHVVDVANFLNSMGANIKGAGTDIIRVTGVKELKGCTYSVIPDQIEAGTYMIATAACGGEVTINNVIPKHLESITAKLIEMGVDVIENGDSVTVKSKGNFKGANIKTQPYPGFPTDVQQPMSTLLTIAKGRSIVNESIWESRFKHVDELKKMGANIKVEGRTAIIDGVPKLTGAIVKATDLRAGAAMVIAGLLAEGDTEILGVEHIDRGYPNIENKFRSLGATIVRL.

22–23 (KN) serves as a coordination point for phosphoenolpyruvate. Residue R94 participates in UDP-N-acetyl-alpha-D-glucosamine binding. C118 functions as the Proton donor in the catalytic mechanism. C118 is modified (2-(S-cysteinyl)pyruvic acid O-phosphothioketal). UDP-N-acetyl-alpha-D-glucosamine-binding positions include 123 to 127 (RPIDQ), D306, and I328.

The protein belongs to the EPSP synthase family. MurA subfamily.

It localises to the cytoplasm. It carries out the reaction phosphoenolpyruvate + UDP-N-acetyl-alpha-D-glucosamine = UDP-N-acetyl-3-O-(1-carboxyvinyl)-alpha-D-glucosamine + phosphate. The protein operates within cell wall biogenesis; peptidoglycan biosynthesis. In terms of biological role, cell wall formation. Adds enolpyruvyl to UDP-N-acetylglucosamine. The protein is UDP-N-acetylglucosamine 1-carboxyvinyltransferase of Clostridium botulinum (strain ATCC 19397 / Type A).